A 517-amino-acid chain; its full sequence is MIESLIALIAAIVGLGIGYLVAKKINDAKYEIFVEQAKAKAKAIEYEAELILKDAKNSILNAELEVKKKYEEKTHKIQKDFNQKFDDLSKKEQKLQQEEEKLKEDKEYLCKSQKHIQDLQSDVDKLKNKYQEKLDDVLKILEHSTGLTQNEAKEIILKKVEENSREQIAHIVRKYEEEAKNEAKRKANFIIAQATSRFAGEFAAERLINVINIKNDELKGRIIGKEGRNVKTLEMVLGVDIIIDDTPGAIIVSCFNLYRRAIATKVIELLVEDGRIQPARIEEIHEKVCKEFDSAILEEGETIVMDLGLNKIHPEIVKLIGKLKYRASYGQNALAHSLEVAHLAGIIAAECGGDENLARRAGILHDIGKALTHDFEGSHVDLGAELCKRYKEHPVVINAIYAHHGHEEATSIESAAVCAADTLSAARPGARREVLEAFLKRVSELEDIAKSKEGIKNAYAINAGREIRVIANAQLVNDDESVLLAKEIAAEIQEKMQYPGEIKVNVIRELRAVEYAK.

Residues 1-21 (MIESLIALIAAIVGLGIGYLV) form a helical membrane-spanning segment. Residues 207-273 (LINVINIKND…TKVIELLVED (67 aa)) form the KH domain. An HD domain is found at 333–426 (ALAHSLEVAH…VCAADTLSAA (94 aa)).

This sequence belongs to the RNase Y family.

It localises to the cell membrane. Endoribonuclease that initiates mRNA decay. In Campylobacter jejuni subsp. jejuni serotype O:6 (strain 81116 / NCTC 11828), this protein is Ribonuclease Y.